A 212-amino-acid chain; its full sequence is Thymidylate kinase (212 aa).

10 to 17 lines the ATP pocket; the sequence is GPDGSGKS.

The protein belongs to the thymidylate kinase family.

The enzyme catalyses dTMP + ATP = dTDP + ADP. Functionally, phosphorylation of dTMP to form dTDP in both de novo and salvage pathways of dTTP synthesis. The polypeptide is Thymidylate kinase (Exiguobacterium sp. (strain ATCC BAA-1283 / AT1b)).